The following is a 214-amino-acid chain: Large ribosomal subunit protein uL4c (214 aa).

Residues 42-81 (VKQSNEKRQGSANTKTRSEVRGGGRKPWRQKGTGRARAGS) are disordered. Residues 64 to 75 (GGRKPWRQKGTG) show a composition bias toward basic residues.

It belongs to the universal ribosomal protein uL4 family. In terms of assembly, part of the 50S ribosomal subunit.

It localises to the plastid. Its subcellular location is the chloroplast. In terms of biological role, probably binds the 23S rRNA. The protein is Large ribosomal subunit protein uL4c (rpl4) of Pyropia yezoensis (Susabi-nori).